The chain runs to 124 residues: MHRFVLVATGGIFGSLARYVLSGVAQKLTTSSFPYGTVLVNLLGSLLFGLVWGILENRITFAPEARLLLLTGFMGSLTTFSTLTYEGMVLLQSHMWLQAALYIVGQTVAGIMLVWFGAGLGRLV.

A run of 4 helical transmembrane segments spans residues 4 to 24 (FVLV…LSGV), 35 to 55 (YGTV…WGIL), 67 to 87 (LLLL…TYEG), and 100 to 120 (ALYI…GAGL). Positions 75 and 78 each coordinate Na(+).

This sequence belongs to the fluoride channel Fluc/FEX (TC 1.A.43) family.

Its subcellular location is the cell inner membrane. The enzyme catalyses fluoride(in) = fluoride(out). Its activity is regulated as follows. Na(+) is not transported, but it plays an essential structural role and its presence is essential for fluoride channel function. Its function is as follows. Fluoride-specific ion channel. Important for reducing fluoride concentration in the cell, thus reducing its toxicity. In Nitratidesulfovibrio vulgaris (strain ATCC 29579 / DSM 644 / CCUG 34227 / NCIMB 8303 / VKM B-1760 / Hildenborough) (Desulfovibrio vulgaris), this protein is Fluoride-specific ion channel FluC.